Consider the following 289-residue polypeptide: Acetyl-coenzyme A carboxylase carboxyl transferase subunit beta (289 aa).

A CoA carboxyltransferase N-terminal domain is found at 34-289 (MWVKCNKCGE…KLINMHQNSF (256 aa)). Residues C38, C41, C57, and C60 each contribute to the Zn(2+) site. Residues 38-60 (CNKCGEILYQNDLEKNYMVCNLC) form a C4-type zinc finger.

It belongs to the AccD/PCCB family. As to quaternary structure, acetyl-CoA carboxylase is a heterohexamer composed of biotin carboxyl carrier protein (AccB), biotin carboxylase (AccC) and two subunits each of ACCase subunit alpha (AccA) and ACCase subunit beta (AccD). The cofactor is Zn(2+).

It localises to the cytoplasm. The enzyme catalyses N(6)-carboxybiotinyl-L-lysyl-[protein] + acetyl-CoA = N(6)-biotinyl-L-lysyl-[protein] + malonyl-CoA. The protein operates within lipid metabolism; malonyl-CoA biosynthesis; malonyl-CoA from acetyl-CoA: step 1/1. Functionally, component of the acetyl coenzyme A carboxylase (ACC) complex. Biotin carboxylase (BC) catalyzes the carboxylation of biotin on its carrier protein (BCCP) and then the CO(2) group is transferred by the transcarboxylase to acetyl-CoA to form malonyl-CoA. The sequence is that of Acetyl-coenzyme A carboxylase carboxyl transferase subunit beta from Clostridium botulinum (strain Okra / Type B1).